Reading from the N-terminus, the 673-residue chain is Armadillo repeat-containing protein 8 (673 aa).

Ala2 is subject to N-acetylalanine. ARM repeat units lie at residues 51–92 (NKQK…SLAM), 95–134 (ENNV…TIFT), 138–176 (TPEE…HCCK), 178–217 (PDHQ…VLAF), 224–265 (MTLV…YMCR), 269–309 (IRTD…YLIE), 313–352 (ELQR…HDLK), 374–413 (DIRK…SLSR), 416–455 (QQLR…NLLL), 458–497 (SPSK…NMAF), 501–540 (QKIK…NLLS), 543–585 (PHID…NIAD), 588–627 (TAKD…NLIW), and 634–673 (QERQ…QYLA). Ser337 is modified (phosphoserine). Position 512 is a phosphoserine (Ser512).

As to quaternary structure, identified in the CTLH complex that contains GID4, RANBP9 and/or RANBP10, MKLN1, MAEA, RMND5A (or alternatively its paralog RMND5B), GID8, ARMC8, WDR26 and YPEL5. Within this complex, MAEA, RMND5A (or alternatively its paralog RMND5B), GID8, WDR26, and RANBP9 and/or RANBP10 form the catalytic core, while GID4, MKLN1, ARMC8 and YPEL5 have ancillary roles.

It localises to the nucleus. The protein resides in the cytoplasm. In terms of biological role, component of the CTLH E3 ubiquitin-protein ligase complex that selectively accepts ubiquitin from UBE2H and mediates ubiquitination and subsequent proteasomal degradation of the transcription factor HBP1. In Homo sapiens (Human), this protein is Armadillo repeat-containing protein 8 (ARMC8).